The chain runs to 285 residues: Tryptophan synthase alpha chain (285 aa).

Active-site proton acceptor residues include glutamate 53 and aspartate 64.

This sequence belongs to the TrpA family. Tetramer of two alpha and two beta chains.

The catalysed reaction is (1S,2R)-1-C-(indol-3-yl)glycerol 3-phosphate + L-serine = D-glyceraldehyde 3-phosphate + L-tryptophan + H2O. It participates in amino-acid biosynthesis; L-tryptophan biosynthesis; L-tryptophan from chorismate: step 5/5. In terms of biological role, the alpha subunit is responsible for the aldol cleavage of indoleglycerol phosphate to indole and glyceraldehyde 3-phosphate. This is Tryptophan synthase alpha chain from Bordetella bronchiseptica (strain ATCC BAA-588 / NCTC 13252 / RB50) (Alcaligenes bronchisepticus).